The following is a 490-amino-acid chain: Adenylosuccinate lyase (490 aa).

A2 bears the N-acetylalanine mark. Substrate contacts are provided by residues 26 to 27 (RY), 91 to 93 (RHD), and 117 to 118 (TS). At K153 the chain carries N6-acetyllysine. H165 (proton donor/acceptor) is an active-site residue. Q247 provides a ligand contact to substrate. The active-site Proton donor/acceptor is the S295. K301 is modified (N6-acetyllysine). Substrate is bound by residues R309, R335, S340, and R344. Residue K421 forms a Glycyl lysine isopeptide (Lys-Gly) (interchain with G-Cter in SUMO1) linkage.

This sequence belongs to the lyase 1 family. Adenylosuccinate lyase subfamily. As to quaternary structure, homotetramer. Residues from neighboring subunits contribute catalytic and substrate-binding residues to each active site.

The catalysed reaction is N(6)-(1,2-dicarboxyethyl)-AMP = fumarate + AMP. It catalyses the reaction (2S)-2-[5-amino-1-(5-phospho-beta-D-ribosyl)imidazole-4-carboxamido]succinate = 5-amino-1-(5-phospho-beta-D-ribosyl)imidazole-4-carboxamide + fumarate. It functions in the pathway purine metabolism; AMP biosynthesis via de novo pathway; AMP from IMP: step 2/2. It participates in purine metabolism; IMP biosynthesis via de novo pathway; 5-amino-1-(5-phospho-D-ribosyl)imidazole-4-carboxamide from 5-amino-1-(5-phospho-D-ribosyl)imidazole-4-carboxylate: step 2/2. In terms of biological role, catalyzes two non-sequential steps in de novo AMP synthesis: converts (S)-2-(5-amino-1-(5-phospho-D-ribosyl)imidazole-4-carboxamido)succinate (SAICAR) to fumarate plus 5-amino-1-(5-phospho-D-ribosyl)imidazole-4-carboxamide, and thereby also contributes to de novo IMP synthesis, and converts succinyladenosine monophosphate (SAMP) to AMP and fumarate. The protein is Adenylosuccinate lyase (ADSL) of Bos taurus (Bovine).